Reading from the N-terminus, the 1367-residue chain is DNA polymerase III PolC-type (1367 aa).

The region spanning 358 to 513 is the Exonuclease domain; the sequence is FVVLDFETTG…DDARVTAQVF (156 aa).

This sequence belongs to the DNA polymerase type-C family. PolC subfamily.

It localises to the cytoplasm. The enzyme catalyses DNA(n) + a 2'-deoxyribonucleoside 5'-triphosphate = DNA(n+1) + diphosphate. In terms of biological role, required for replicative DNA synthesis. This DNA polymerase also exhibits 3' to 5' exonuclease activity. In Thermotoga petrophila (strain ATCC BAA-488 / DSM 13995 / JCM 10881 / RKU-1), this protein is DNA polymerase III PolC-type.